The sequence spans 122 residues: UPF0102 protein Gmet_2864 (122 aa).

This sequence belongs to the UPF0102 family.

This Geobacter metallireducens (strain ATCC 53774 / DSM 7210 / GS-15) protein is UPF0102 protein Gmet_2864.